Here is a 249-residue protein sequence, read N- to C-terminus: Cell division protein DivIB (249 aa).

Residues 1–19 (MKEENEYIVKRRKKRRRKR) are Cytoplasmic-facing. Residues 20 to 40 (ITIFLFLLICILVTLCLKLPY) form a helical membrane-spanning segment. In terms of domain architecture, POTRA spans 41 to 109 (FNIKYINVEG…NTIDIIVKER (69 aa)). Residues 41-249 (FNIKYINVEG…KGNPVYSLQQ (209 aa)) are Extracellular-facing.

The protein belongs to the FtsQ/DivIB family. DivIB subfamily.

It localises to the cell membrane. Functionally, cell division protein that may be involved in stabilizing or promoting the assembly of the division complex. This Clostridium acetobutylicum (strain ATCC 824 / DSM 792 / JCM 1419 / IAM 19013 / LMG 5710 / NBRC 13948 / NRRL B-527 / VKM B-1787 / 2291 / W) protein is Cell division protein DivIB.